A 609-amino-acid polypeptide reads, in one-letter code: Protein NRT1/ PTR FAMILY 7.1 (609 aa).

Helical transmembrane passes span 67-87 (IILL…GVNL) and 109-129 (WTGT…SYWG). Residue Thr-133 is modified to Phosphothreonine. 10 helical membrane-spanning segments follow: residues 136-156 (IFQV…WFFL), 173-193 (SSLG…GYGG), 216-236 (FFSY…TILV), 243-263 (LWTE…VAFL), 367-387 (PIWL…SLFV), 402-422 (IPAA…TGIY), 438-458 (MGIG…TEIQ), 474-494 (ILWQ…MYVG), 516-536 (MASM…VMAI), and 559-579 (FYFL…IFAK).

Belongs to the major facilitator superfamily. Proton-dependent oligopeptide transporter (POT/PTR) (TC 2.A.17) family. Expressed in flowers.

The protein localises to the membrane. The chain is Protein NRT1/ PTR FAMILY 7.1 (NPF7.1) from Arabidopsis thaliana (Mouse-ear cress).